The chain runs to 753 residues: Probable phosphoenolpyruvate synthase (753 aa).

H398 serves as the catalytic Tele-phosphohistidine intermediate. R488, R535, E631, G653, T654, N655, and D656 together coordinate substrate. Position 631 (E631) interacts with Mg(2+). D656 contacts Mg(2+). The Proton donor role is filled by C703.

Belongs to the PEP-utilizing enzyme family. Mg(2+) serves as cofactor.

It catalyses the reaction pyruvate + ATP + H2O = phosphoenolpyruvate + AMP + phosphate + 2 H(+). Its pathway is carbohydrate biosynthesis; gluconeogenesis. Catalyzes the phosphorylation of pyruvate to phosphoenolpyruvate. The chain is Probable phosphoenolpyruvate synthase (ppsA) from Archaeoglobus fulgidus (strain ATCC 49558 / DSM 4304 / JCM 9628 / NBRC 100126 / VC-16).